The sequence spans 637 residues: MAMISARRYFLLGLLVLTTSAYVTVGDEGDPCQVRSDIPGICLSSSACENIRGYLKSGTLSTSQVPSCGFGAREEIICCPTVACCATDRGREVQFHATSSERSSLPEPKREPTPEPEPLPPTTTEGKRERESRLDENQNFFDFNKLLSTTVKPQKTHESLKLPTQESMKTPTHESMKMPTHESMKLPTHEPMKLPIQSVGAWGIAPSKTQPIASTQRSFMEPEWGREPRIVNRPLTTPRSRPQRPNNSNFNTNPSPNNNNLIHLVNDRLREQGMQIEPAREVPMVLQTTPTPTPAPTPTQLIDPFEPYRFRGQDRDKDTQPQEPWNDVSNNLDADPAPSIFNPAETRPTTPNPNPSRVNLPEKERPSVAACEKIRSGGKPLTVHILDGERVDRGVYPHMAAIAYNSFGSAAFRCGGSLIASRFVLTAAHCVNSDDSTPSFVRLGALNIENPEPGYQDINVIDVQIHPDYSGSSKYYDIAILQLAEDAKESDVIRPACLYTDRSDPPANYKYFVAGWGVMNVTNRAVSKILLRAALDLVPADECNASFAEQPSANRTLRRGVIASQLCAADKNQRKDACQGDSGGPLILEIDDVDGTYSIVGVISSGFGCATKTPGLYTRVSSFLDYIEGIVWPSNRF.

Residues 1–26 (MAMISARRYFLLGLLVLTTSAYVTVG) form the signal peptide. The 49-residue stretch at 31 to 79 (PCQVRSDIPGICLSSSACENIRGYLKSGTLSTSQVPSCGFGAREEIICC) folds into the Clip domain. Disulfide bonds link C32-C78, C42-C68, and C48-C79. Disordered regions lie at residues 95–137 (FHAT…LDEN), 152–178 (KPQK…SMKM), 216–260 (QRSF…NNNN), and 286–365 (LQTT…EKER). The segment covering 125–136 (EGKRERESRLDE) has biased composition (basic and acidic residues). A compositionally biased stretch (polar residues) spans 234–244 (PLTTPRSRPQR). The segment covering 245-260 (PNNSNFNTNPSPNNNN) has biased composition (low complexity). Residues 306–320 (EPYRFRGQDRDKDTQ) show a composition bias toward basic and acidic residues. The segment covering 321 to 332 (PQEPWNDVSNNL) has biased composition (polar residues). Intrachain disulfides connect C371–C497, C414–C430, C543–C567, and C578–C609. The Peptidase S1 domain maps to 385 to 632 (ILDGERVDRG…FLDYIEGIVW (248 aa)). Residues H429 and D477 each act as charge relay system in the active site. The Charge relay system role is filled by S582.

The protein belongs to the peptidase S1 family. CLIP subfamily.

The protein localises to the secreted. Serine protease which, by converting prophenoloxidase 1 (PPO1) into its active form, plays an essential role in the melanization immune response to physical or septic wounding. May function in diverse PPO1-activating cascades that are negatively controlled by different serpin proteins; Spn27A and Spn28D in the hemolymph, and Spn28D and Spn77BA in the trachea. Also required in the systematic wound response by mediating the redox-dependent activation of the JNK cytoprotective cascade in neuronal tissues after integument wounding. The protein is Serine protease Hayan of Drosophila melanogaster (Fruit fly).